A 512-amino-acid polypeptide reads, in one-letter code: Activin receptor type-2B (512 aa).

The N-terminal stretch at Met-1–Gly-18 is a signal peptide. The Extracellular portion of the chain corresponds to Ser-19 to Thr-137. 5 disulfide bridges follow: Cys-29-Cys-59, Cys-49-Cys-77, Cys-84-Cys-103, Cys-90-Cys-102, and Cys-104-Cys-109. N-linked (GlcNAc...) asparagine glycosylation is found at Asn-42 and Asn-65. A helical membrane pass occupies residues Val-138–Trp-158. Residues Met-159 to Ile-512 are Cytoplasmic-facing. The region spanning Leu-190–Leu-480 is the Protein kinase domain. Residues Lys-196 to Val-204 and Lys-217 each bind ATP. Asp-321 (proton acceptor) is an active-site residue. Residues Asp-491 to Ile-512 form an interaction with DYNLT1 region.

It belongs to the protein kinase superfamily. TKL Ser/Thr protein kinase family. TGFB receptor subfamily. In terms of assembly, forms an activin receptor complex with activin type II receptors such as ACVR1B. Interacts with VPS39. Interacts with DYNLT1. Interacts with BMP3. Interacts with BMP2. Interacts with BMP6. Mg(2+) serves as cofactor. Mn(2+) is required as a cofactor. Post-translationally, phosphorylated. Constitutive phosphorylation is in part catalyzed by its own kinase activity.

The protein resides in the cell membrane. The enzyme catalyses L-threonyl-[receptor-protein] + ATP = O-phospho-L-threonyl-[receptor-protein] + ADP + H(+). It catalyses the reaction L-seryl-[receptor-protein] + ATP = O-phospho-L-seryl-[receptor-protein] + ADP + H(+). In terms of biological role, transmembrane serine/threonine kinase activin type-2 receptor forming an activin receptor complex with activin type-1 serine/threonine kinase receptors (ACVR1, ACVR1B or ACVR1c). Transduces the activin signal from the cell surface to the cytoplasm and is thus regulating many physiological and pathological processes including neuronal differentiation and neuronal survival, hair follicle development and cycling, FSH production by the pituitary gland, wound healing, extracellular matrix production, immunosuppression and carcinogenesis. Activin is also thought to have a paracrine or autocrine role in follicular development in the ovary. Within the receptor complex, the type-2 receptors act as a primary activin receptors (binds activin-A/INHBA, activin-B/INHBB as well as inhibin-A/INHA-INHBA). The type-1 receptors like ACVR1B act as downstream transducers of activin signals. Activin binds to type-2 receptor at the plasma membrane and activates its serine-threonine kinase. The activated receptor type-2 then phosphorylates and activates the type-1 receptor. Once activated, the type-1 receptor binds and phosphorylates the SMAD proteins SMAD2 and SMAD3, on serine residues of the C-terminal tail. Soon after their association with the activin receptor and subsequent phosphorylation, SMAD2 and SMAD3 are released into the cytoplasm where they interact with the common partner SMAD4. This SMAD complex translocates into the nucleus where it mediates activin-induced transcription. Inhibitory SMAD7, which is recruited to ACVR1B through FKBP1A, can prevent the association of SMAD2 and SMAD3 with the activin receptor complex, thereby blocking the activin signal. Activin signal transduction is also antagonized by the binding to the receptor of inhibin-B via the IGSF1 inhibin coreceptor. The protein is Activin receptor type-2B (ACVR2B) of Homo sapiens (Human).